A 180-amino-acid polypeptide reads, in one-letter code: Cell division protein SepF (180 aa).

The disordered stretch occupies residues 14 to 81 (NSEDDEEFDN…SKITPISKSS (68 aa)). The span at 15-35 (SEDDEEFDNEDYYLDDEEEEE) shows a compositional bias: acidic residues. Basic and acidic residues predominate over residues 57-68 (TRRDTTPKEKPV). Residues 69 to 79 (KTTSKITPISK) are compositionally biased toward low complexity.

The protein belongs to the SepF family. Homodimer. Interacts with FtsZ.

It localises to the cytoplasm. Cell division protein that is part of the divisome complex and is recruited early to the Z-ring. Probably stimulates Z-ring formation, perhaps through the cross-linking of FtsZ protofilaments. Its function overlaps with FtsA. The sequence is that of Cell division protein SepF from Agathobacter rectalis (strain ATCC 33656 / DSM 3377 / JCM 17463 / KCTC 5835 / VPI 0990) (Eubacterium rectale).